Here is a 306-residue protein sequence, read N- to C-terminus: N-acetylmuramic acid 6-phosphate etherase (306 aa).

Residues 59 to 222 (TAQALGRGGR…STGVMVCLGK (164 aa)) enclose the SIS domain. The Proton donor role is filled by Glu-87. The active site involves Glu-118.

The protein belongs to the GCKR-like family. MurNAc-6-P etherase subfamily. As to quaternary structure, homodimer.

It catalyses the reaction N-acetyl-D-muramate 6-phosphate + H2O = N-acetyl-D-glucosamine 6-phosphate + (R)-lactate. The protein operates within amino-sugar metabolism; N-acetylmuramate degradation. Its function is as follows. Specifically catalyzes the cleavage of the D-lactyl ether substituent of MurNAc 6-phosphate, producing GlcNAc 6-phosphate and D-lactate. The protein is N-acetylmuramic acid 6-phosphate etherase of Rippkaea orientalis (strain PCC 8801 / RF-1) (Cyanothece sp. (strain PCC 8801)).